The primary structure comprises 338 residues: Glycerol-3-phosphate dehydrogenase [NAD(P)+] (338 aa).

Residues Ser-18, Tyr-19, His-39, and Lys-113 each coordinate NADPH. Lys-113, Gly-142, and Thr-144 together coordinate sn-glycerol 3-phosphate. Position 146 (Ala-146) interacts with NADPH. The sn-glycerol 3-phosphate site is built by Lys-198, Asp-251, Ser-261, Arg-262, and Asn-263. The active-site Proton acceptor is the Lys-198. Arg-262 is a binding site for NADPH. NADPH-binding residues include Val-286 and Glu-288.

Belongs to the NAD-dependent glycerol-3-phosphate dehydrogenase family.

It is found in the cytoplasm. It carries out the reaction sn-glycerol 3-phosphate + NAD(+) = dihydroxyacetone phosphate + NADH + H(+). The enzyme catalyses sn-glycerol 3-phosphate + NADP(+) = dihydroxyacetone phosphate + NADPH + H(+). It functions in the pathway membrane lipid metabolism; glycerophospholipid metabolism. Functionally, catalyzes the reduction of the glycolytic intermediate dihydroxyacetone phosphate (DHAP) to sn-glycerol 3-phosphate (G3P), the key precursor for phospholipid synthesis. The chain is Glycerol-3-phosphate dehydrogenase [NAD(P)+] from Photobacterium profundum (strain SS9).